Here is a 302-residue protein sequence, read N- to C-terminus: Putative gluconeogenesis factor (302 aa).

Belongs to the gluconeogenesis factor family.

The protein localises to the cytoplasm. In terms of biological role, required for morphogenesis under gluconeogenic growth conditions. This is Putative gluconeogenesis factor (ybhK) from Escherichia coli O157:H7.